The chain runs to 311 residues: Deoxyhypusine hydroxylase (311 aa).

HEAT-like PBS-type repeat units lie at residues 69–95 (LKHE…VLEN), 102–128 (VRHE…YFKN), 196–222 (ERYR…GLDD), 228–254 (FKHE…TLKD), and 261–287 (VRHE…FLND). H71, E72, H104, and E105 together coordinate Fe cation. 4 residues coordinate Fe cation: H230, E231, H263, and E264.

Belongs to the deoxyhypusine hydroxylase family. It depends on Fe(2+) as a cofactor.

It is found in the cytoplasm. The protein resides in the nucleus. It carries out the reaction [eIF5A protein]-deoxyhypusine + AH2 + O2 = [eIF5A protein]-hypusine + A + H2O. It functions in the pathway protein modification; eIF5A hypusination. Its function is as follows. Catalyzes the hydroxylation of the N(6)-(4-aminobutyl)-L-lysine intermediate to form hypusine, an essential post-translational modification only found in mature eIF-5A factor. The protein is Deoxyhypusine hydroxylase of Debaryomyces hansenii (strain ATCC 36239 / CBS 767 / BCRC 21394 / JCM 1990 / NBRC 0083 / IGC 2968) (Yeast).